Reading from the N-terminus, the 159-residue chain is Cyclic pyranopterin monophosphate synthase (159 aa).

Substrate-binding positions include 75–77 (LCH) and 113–114 (ME). The active site involves Asp-128.

The protein belongs to the MoaC family. As to quaternary structure, homohexamer; trimer of dimers.

It carries out the reaction (8S)-3',8-cyclo-7,8-dihydroguanosine 5'-triphosphate = cyclic pyranopterin phosphate + diphosphate. It functions in the pathway cofactor biosynthesis; molybdopterin biosynthesis. Its function is as follows. Catalyzes the conversion of (8S)-3',8-cyclo-7,8-dihydroguanosine 5'-triphosphate to cyclic pyranopterin monophosphate (cPMP). This Heliobacterium modesticaldum (strain ATCC 51547 / Ice1) protein is Cyclic pyranopterin monophosphate synthase.